A 511-amino-acid chain; its full sequence is Myrosinase 4 (511 aa).

The signal sequence occupies residues 1 to 23 (MAIPKAHYSLAVLVLLFVVVSSS). 3 disulfides stabilise this stretch: cysteine 31/cysteine 450, cysteine 39/cysteine 445, and cysteine 230/cysteine 233. Residues asparagine 46 and asparagine 53 are each glycosylated (N-linked (GlcNAc...) asparagine). A beta-D-glucoside is bound by residues glutamine 64, histidine 165, and 210–211 (NQ). Positions 351 and 418 each coordinate a beta-D-glucoside. Glutamate 418 (nucleophile) is an active-site residue. N-linked (GlcNAc...) asparagine glycosylation occurs at asparagine 428. Residues tryptophan 467, 474–475 (EF), and phenylalanine 483 contribute to the a beta-D-glucoside site. N-linked (GlcNAc...) asparagine glycosylation occurs at asparagine 489.

The protein belongs to the glycosyl hydrolase 1 family. In terms of tissue distribution, specifically expressed in roots.

It catalyses the reaction a thioglucoside + H2O = a sugar + a thiol.. The catalysed reaction is Hydrolysis of terminal, non-reducing beta-D-glucosyl residues with release of beta-D-glucose.. Its function is as follows. Hydrolyzes sinigrin and, with lower efficiency, p-nitrophenyl beta-D-glucoside. This chain is Myrosinase 4, found in Arabidopsis thaliana (Mouse-ear cress).